The chain runs to 154 residues: Transcriptional repressor NrdR (154 aa).

Residues 3 to 34 (CPYCRHPDSRVVDSREADDGQLIRRRRSCPEC) fold into a zinc finger. Residues 46–136 (LAVVKRSGVT…VYRSFESLAD (91 aa)) enclose the ATP-cone domain.

It belongs to the NrdR family. Zn(2+) is required as a cofactor.

In terms of biological role, negatively regulates transcription of bacterial ribonucleotide reductase nrd genes and operons by binding to NrdR-boxes. The sequence is that of Transcriptional repressor NrdR from Salinispora arenicola (strain CNS-205).